A 557-amino-acid polypeptide reads, in one-letter code: Potassium-transporting ATPase potassium-binding subunit (557 aa).

A run of 10 helical transmembrane segments spans residues 4–24 (LGAG…VHVP), 61–81 (TYAL…YAFL), 131–151 (GLTV…VALV), 174–194 (LRVL…TGVV), 253–273 (LEVF…GTLV), 280–300 (LAVL…TTWA), 375–395 (GLYG…LMVG), 412–432 (CAAL…AVAL), 483–503 (LAIW…AGAF), and 528–548 (LAVV…LGPI).

Belongs to the KdpA family. The system is composed of three essential subunits: KdpA, KdpB and KdpC.

The protein localises to the cell membrane. Functionally, part of the high-affinity ATP-driven potassium transport (or Kdp) system, which catalyzes the hydrolysis of ATP coupled with the electrogenic transport of potassium into the cytoplasm. This subunit binds the extracellular potassium ions and delivers the ions to the membrane domain of KdpB through an intramembrane tunnel. The chain is Potassium-transporting ATPase potassium-binding subunit from Kineococcus radiotolerans (strain ATCC BAA-149 / DSM 14245 / SRS30216).